A 324-amino-acid chain; its full sequence is Phospho-N-acetylmuramoyl-pentapeptide-transferase (324 aa).

10 helical membrane-spanning segments follow: residues 5–25 (GLLV…PLFI), 52–72 (PTMG…IMAI), 77–97 (LGAE…IGFL), 122–142 (VIAI…YIMI), 149–169 (FELG…GSNA), 176–196 (LDGL…IIAV), 201–221 (FGVA…LVFN), 227–247 (VFMG…VAIL), 253–273 (LLVI…IQVI), and 302–322 (VVVT…YIGV).

Belongs to the glycosyltransferase 4 family. MraY subfamily. Requires Mg(2+) as cofactor.

The protein localises to the cell membrane. The enzyme catalyses UDP-N-acetyl-alpha-D-muramoyl-L-alanyl-gamma-D-glutamyl-meso-2,6-diaminopimeloyl-D-alanyl-D-alanine + di-trans,octa-cis-undecaprenyl phosphate = di-trans,octa-cis-undecaprenyl diphospho-N-acetyl-alpha-D-muramoyl-L-alanyl-D-glutamyl-meso-2,6-diaminopimeloyl-D-alanyl-D-alanine + UMP. The protein operates within cell wall biogenesis; peptidoglycan biosynthesis. Functionally, catalyzes the initial step of the lipid cycle reactions in the biosynthesis of the cell wall peptidoglycan: transfers peptidoglycan precursor phospho-MurNAc-pentapeptide from UDP-MurNAc-pentapeptide onto the lipid carrier undecaprenyl phosphate, yielding undecaprenyl-pyrophosphoryl-MurNAc-pentapeptide, known as lipid I. The protein is Phospho-N-acetylmuramoyl-pentapeptide-transferase of Bacillus anthracis.